The chain runs to 770 residues: Proton-coupled zinc antiporter SLC30A5 (770 aa).

Residues 1-29 (MEEKYSSQALAGGGVLGPVDVPSARLTRY) lie on the Cytoplasmic side of the membrane. Residues 30 to 50 (IVLLCFAKFLKAVGLFESYDL) traverse the membrane as a helical segment. Residues 51–53 (LKA) are Lumenal-facing. The helical transmembrane segment at 54–74 (VHLVQFIFIVKLGSAFFMVLF) threads the bilayer. Over 75–95 (QKPFSSGKVVTKHQWIKIFKH) the chain is Cytoplasmic. A helical membrane pass occupies residues 96-116 (AVVGCIISLLWFFGLTLCGPL). Residue Arg-117 is a topological domain, lumenal. Residues 118-138 (TLLLFEHSDVVVLSLLSVLFT) form a helical membrane-spanning segment. Residues 139–149 (SSGGGPAKTRG) are Cytoplasmic-facing. The chain crosses the membrane as a helical span at residues 150 to 170 (AAFFIIAVICLLLFDNDDLMA). Topologically, residues 171 to 190 (KIAEHPEGHHDSALTHVLYT) are lumenal. The helical transmembrane segment at 191–211 (VIAFLGVADHKGGVLLLVLAL) threads the bilayer. The Cytoplasmic segment spans residues 212–235 (CCKVGFHMASRKLSVDVGGAKRLQ). The helical transmembrane segment at 236–256 (ALSHLVSVLLLCPWVIVLSLT) threads the bilayer. Topologically, residues 257–264 (TESKVESW) are lumenal. A helical transmembrane segment spans residues 265 to 285 (SSLIMPFITVIFFVVILDFYV). Residues 286 to 300 (ESICSVKMESSKCAR) lie on the Cytoplasmic side of the membrane. Residues 301–321 (YGSFLIFISALLFGNFWTHPI) form a helical membrane-spanning segment. Residues 322 to 339 (TDQLRAMNKPAHHESTEH) are Lumenal-facing. The helical transmembrane segment at 340–360 (VLSGGVVVSAVFFILSANILS) threads the bilayer. Topologically, residues 361–415 (SPSRKGQKGTLIGYSPEGTPLYNFMGDAIQQSSQSLPRFIKESLKQILEEYDSRQ) are cytoplasmic. A helical transmembrane segment spans residues 416-436 (IFYFLCLNLAFTFVELFYGVW). The Lumenal portion of the chain corresponds to 437-445 (TNSLGLISD). Residues 446–466 (GFHMLFDCSALVMGLFAALMT) form a helical membrane-spanning segment. Zn(2+)-binding residues include His-448 and Asp-452. The Cytoplasmic segment spans residues 467–480 (RWKATRIFSYGYGR). A helical transmembrane segment spans residues 481–501 (VEILSGFINGLFLMVIAFFVF). Over 502–517 (MESVARLVDPPDIDTN) the chain is Lumenal. A helical membrane pass occupies residues 518–538 (MLTPVSVGGLIVNLVGICAFS). Residues 539–579 (HAHSHGASRGGCHSHEHSHSYHGHSHSHGHGHSHNDHGHSH) are his-rich loop; required for zinc transport. At 539 to 597 (HAHSHGASRGGCHSHEHSHSYHGHSHSHGHGHSHNDHGHSHGHSHVSSGGGMNTNMRGV) the chain is on the cytoplasmic side. The interval 548–586 (GGCHSHEHSHSYHGHSHSHGHGHSHNDHGHSHGHSHVSS) is disordered. Over residues 558–570 (SYHGHSHSHGHGH) the composition is skewed to basic residues. The chain crosses the membrane as a helical span at residues 598-618 (FLHVLADTLGSVGVIVSTTFI). Zn(2+)-binding residues include His-600 and Asp-604. Residues 619 to 622 (QQFG) are Lumenal-facing. A helical transmembrane segment spans residues 623–643 (WLIADPLCSLFIATLIFLSVI). The Cytoplasmic portion of the chain corresponds to 644–770 (PLLKDACQVL…KYYKDGTYIM (127 aa)).

The protein belongs to the cation diffusion facilitator (CDF) transporter (TC 2.A.4) family. SLC30A subfamily. Heterodimer with SLC30A6/ZNT6; form a functional zinc ion transmembrane transporter.

Its subcellular location is the golgi apparatus. It is found in the golgi stack membrane. The protein localises to the cytoplasmic vesicle. It localises to the COPII-coated vesicle membrane. The protein resides in the secretory vesicle membrane. Its subcellular location is the trans-Golgi network membrane. It carries out the reaction Zn(2+)(in) + 2 H(+)(out) = Zn(2+)(out) + 2 H(+)(in). Together with SLC30A6 forms a functional proton-coupled zinc ion antiporter mediating zinc entry into the lumen of organelles along the secretory pathway. By contributing to zinc ion homeostasis within the early secretory pathway, regulates the activation and folding of enzymes like alkaline phosphatases and enzymes involved in phosphatidylinositol glycan anchor biosynthesis. This is Proton-coupled zinc antiporter SLC30A5 from Gallus gallus (Chicken).